We begin with the raw amino-acid sequence, 316 residues long: MSEEKIYDVIIIGAGPAGMTAAVYTSRANLSTLMIERGIPGGQMANTEDVENYPGFESILGPELSNKMFEHAKKFGAEYAYGDIKEVIDGKEYKVVKAGSKEYKARAVIIAAGAEYKKIGVPGEKELGGRGVSYCAVCDGAFFKGKELVVVGGGDSAVEEGVYLTRFASKVTIVHRRDKLRAQSILQARAFDNEKVDFLWNKTVKEIHEENGKVGNVTLVDTVTGEESEFKTDGVFIYIGMLPLSKPFENLGITNEEGYIETNDRMETKVEGIFAAGDIREKSLRQIVTATGDGSIAAQSVQHYVEELQETLKTLK.

36-43 (ERGIPGGQ) serves as a coordination point for FAD. The cysteines at positions 135 and 138 are disulfide-linked. 278 to 287 (DIREKSLRQI) serves as a coordination point for FAD.

It belongs to the class-II pyridine nucleotide-disulfide oxidoreductase family. As to quaternary structure, homodimer. It depends on FAD as a cofactor.

It is found in the cytoplasm. The catalysed reaction is [thioredoxin]-dithiol + NADP(+) = [thioredoxin]-disulfide + NADPH + H(+). This is Thioredoxin reductase (trxB) from Bacillus subtilis (strain 168).